The chain runs to 170 residues: Alpha-crystallin A chain (170 aa).

Methionine 1 carries the post-translational modification N-acetylmethionine. Residues 1–63 form a required for complex formation with BFSP1 and BFSP2 region; that stretch reads MDVTIQHPWF…RTVLDSGISE (63 aa). A Deamidated glutamine; partial modification is found at glutamine 6. Residue serine 45 is modified to Phosphoserine. Position 50 is a deamidated glutamine; partial (glutamine 50). The 110-residue stretch at 52-161 folds into the sHSP domain; it reads LFRTVLDSGI…SERTIPVSRE (110 aa). An N6-acetyllysine mark is found at lysine 70 and lysine 99. A Zn(2+)-binding site is contributed by histidine 100. Asparagine 101 is subject to Deamidated asparagine; partial. 3 residues coordinate Zn(2+): glutamate 102, histidine 107, and histidine 151. The interval 144 to 170 is disordered; sequence PKIVDPSHSERTIPVSREEKPSSAPSS. Basic and acidic residues predominate over residues 148–164; it reads DPSHSERTIPVSREEKP. O-linked (GlcNAc) serine glycosylation occurs at serine 159.

Belongs to the small heat shock protein (HSP20) family. In terms of assembly, heteromer composed of three CRYAA and one CRYAB subunits. Inter-subunit bridging via zinc ions enhances stability, which is crucial as there is no protein turn over in the lens. Can also form homodimers and homotetramers (dimers of dimers) which serve as the building blocks of homooligomers. Within homooligomers, the zinc-binding motif is created from residues of 3 different molecules. His-100 and Glu-102 from one molecule are ligands of the zinc ion, and His-107 and His-151 residues from additional molecules complete the site with tetrahedral coordination geometry. Part of a complex required for lens intermediate filament formation composed of BFSP1, BFSP2 and CRYAA. Post-translationally, acetylation at Lys-70 may increase chaperone activity. In terms of processing, undergoes age-dependent proteolytical cleavage at the C-terminus.

Its subcellular location is the cytoplasm. The protein resides in the nucleus. In terms of biological role, contributes to the transparency and refractive index of the lens. Acts as a chaperone, preventing aggregation of various proteins under a wide range of stress conditions. Required for the correct formation of lens intermediate filaments as part of a complex composed of BFSP1, BFSP2 and CRYAA. The sequence is that of Alpha-crystallin A chain (CRYAA) from Choloepus hoffmanni (Hoffmann's two-fingered sloth).